A 416-amino-acid polypeptide reads, in one-letter code: MLNAQQFLNQFSLEAPLDESLYPIIRDICQEVKVHGDKALKMYNLTFDHTKTDHLEISHEQIKAAFDTLDEKTKQALQQSYERIKAYQESIKQTNQQLEKSVECYEIYHPLESVGIYVPGGKASYPSTVLMTATLAQVAGVENIVVVTPPQPNGVSQEVLAACYITQVNQVFQVGGAQSIAALTYGTETIPKVDKIVGPGNQFVAYAKKYLFGQVGIDQIAGPTEIALIIDDTADLDAIVYDVFAQAEHDELARTYVISEDAQVLKDLESRITKALPNVDRYDIVSKSIANQHYLIHASNFDDACHVMNTIAPEHASIQTVNPQPYIEKVKYVGALFIGHYSPEVIGDYVAGPSHVLPTNRTARFTNGLSVNDFLTRNTVIHLSKDTFEQIADSAQHIAHVEALYNHQQSILIRQS.

NAD(+) contacts are provided by Tyr117, Gln178, and Asn201. 3 residues coordinate substrate: Thr224, Gln246, and His249. Zn(2+) contacts are provided by Gln246 and His249. Catalysis depends on proton acceptor residues Glu314 and His315. Substrate is bound by residues His315, Asp348, Glu402, and His407. Residue Asp348 participates in Zn(2+) binding. His407 provides a ligand contact to Zn(2+).

Belongs to the histidinol dehydrogenase family. It depends on Zn(2+) as a cofactor.

It catalyses the reaction L-histidinol + 2 NAD(+) + H2O = L-histidine + 2 NADH + 3 H(+). The protein operates within amino-acid biosynthesis; L-histidine biosynthesis; L-histidine from 5-phospho-alpha-D-ribose 1-diphosphate: step 9/9. Its function is as follows. Catalyzes the sequential NAD-dependent oxidations of L-histidinol to L-histidinaldehyde and then to L-histidine. In Staphylococcus aureus (strain bovine RF122 / ET3-1), this protein is Histidinol dehydrogenase.